A 339-amino-acid polypeptide reads, in one-letter code: Heat-inducible transcription repressor HrcA (339 aa).

The protein belongs to the HrcA family.

In terms of biological role, negative regulator of class I heat shock genes (grpE-dnaK-dnaJ and groELS operons). Prevents heat-shock induction of these operons. This chain is Heat-inducible transcription repressor HrcA, found in Clostridium perfringens (strain SM101 / Type A).